Reading from the N-terminus, the 23-residue chain is Melittin-related peptide AK-23-1 (23 aa).

A Lysine amide modification is found at Lys-23.

Expressed by the skin glands.

It localises to the secreted. This is Melittin-related peptide AK-23-1 from Rana arvalis (Moor frog).